The following is a 261-amino-acid chain: MMLLAIEQGNTNTMFAIHDGASWVAQWRSATESTRTADEYVVWLSQLLSMQGLGFRAIDAVIISSVVPQSIFNLRNLSRRYFNVEPLVIGENAKLGIDVRIEKPSEAGADRLVNAIGAAMVYPGPLVVIDSGTATTFDIVAADGAFEGGIIAPGINLSMQALHEAAAKLPRIAIQRPAGNRIVGTDTVSAMQSGVFWGYISLIEGLVARIKAERGEPMTVIATGGVASLFEGATDSIDHFDSDLTIRGLLEIYRRNTIAES.

Residue 7-14 participates in ATP binding; it reads EQGNTNTM. 108–111 contributes to the substrate binding site; the sequence is GADR. Asp-110 acts as the Proton acceptor in catalysis. Asp-130 lines the K(+) pocket. Thr-133 provides a ligand contact to ATP. Thr-187 is a binding site for substrate.

This sequence belongs to the type III pantothenate kinase family. Homodimer. Requires NH4(+) as cofactor. The cofactor is K(+).

It is found in the cytoplasm. The catalysed reaction is (R)-pantothenate + ATP = (R)-4'-phosphopantothenate + ADP + H(+). Its pathway is cofactor biosynthesis; coenzyme A biosynthesis; CoA from (R)-pantothenate: step 1/5. Functionally, catalyzes the phosphorylation of pantothenate (Pan), the first step in CoA biosynthesis. This Caulobacter vibrioides (strain ATCC 19089 / CIP 103742 / CB 15) (Caulobacter crescentus) protein is Type III pantothenate kinase.